The sequence spans 513 residues: ATP synthase subunit alpha (513 aa).

169–176 (GDRQIGKS) serves as a coordination point for ATP.

This sequence belongs to the ATPase alpha/beta chains family. As to quaternary structure, F-type ATPases have 2 components, CF(1) - the catalytic core - and CF(0) - the membrane proton channel. CF(1) has five subunits: alpha(3), beta(3), gamma(1), delta(1), epsilon(1). CF(0) has three main subunits: a(1), b(2) and c(9-12). The alpha and beta chains form an alternating ring which encloses part of the gamma chain. CF(1) is attached to CF(0) by a central stalk formed by the gamma and epsilon chains, while a peripheral stalk is formed by the delta and b chains.

The protein resides in the cell inner membrane. The enzyme catalyses ATP + H2O + 4 H(+)(in) = ADP + phosphate + 5 H(+)(out). Functionally, produces ATP from ADP in the presence of a proton gradient across the membrane. The alpha chain is a regulatory subunit. In Colwellia psychrerythraea (strain 34H / ATCC BAA-681) (Vibrio psychroerythus), this protein is ATP synthase subunit alpha.